Here is a 323-residue protein sequence, read N- to C-terminus: MFGLQMSVATSDMNGSDPGQPGQRPAAVLIAGPTASGKSALALRLAQARDGVVINTDSMQMYRDLRIITARPTAEEEALAAHRLYGSVDAAVNFSAGAYVEAAAGALAEARAAGRLPIFVGGTGLYFKALTRGLSAVPPVAAEVRDAVRLRLDRDGVLALHAELARHDPAGAARLAPADRSRIARALEVVLATGRPLADWHNQASPPLLPPEGFVAMFLAPEREALYGRIDARFAAMLQAGALEEVAALAARNLDPLLPAMKAHGVPALIRHFRGELSLEEAAAIGAADTRHYAKRQFTWFRHQLPEFRWVTPEQAESGLLGT.

Residue 32-39 (GPTASGKS) participates in ATP binding. Residue 34-39 (TASGKS) coordinates substrate. The interval 57 to 60 (DSMQ) is interaction with substrate tRNA.

The protein belongs to the IPP transferase family. As to quaternary structure, monomer. It depends on Mg(2+) as a cofactor.

It catalyses the reaction adenosine(37) in tRNA + dimethylallyl diphosphate = N(6)-dimethylallyladenosine(37) in tRNA + diphosphate. Functionally, catalyzes the transfer of a dimethylallyl group onto the adenine at position 37 in tRNAs that read codons beginning with uridine, leading to the formation of N6-(dimethylallyl)adenosine (i(6)A). The chain is tRNA dimethylallyltransferase from Rhodopseudomonas palustris (strain BisB5).